We begin with the raw amino-acid sequence, 319 residues long: MALECDSTIVFPRPLTRLVKCDLELRNTAPYPIGFKVKTTAPKQYCVRPNGGRIEANSAVSVEVILQPLDHEPAPGTKCRDKFLVQSTELKPELQGMDIADIWTQVSKANISERKIRCVYSEGPSTANAHANAHHQPAQTTTTSIPTSATDNYTTVNGNVNQSYSKGIDGTALPSTHANPVAAPSTATTQHTQLPKTSAVSHQKPHEAPSTAVKAPTATVAENEPYPKPQSVPTTTSPNNENNALRSTANVINNTRQSTATSPSMFAGNSGNQIGLARVSSSFGRPTSGAKVVPQIHNTVTVQTAFLLAIICFLIGLLF.

The region spanning 1–121 (MALECDSTIV…SERKIRCVYS (121 aa)) is the MSP domain. Over 1-298 (MALECDSTIV…GAKVVPQIHN (298 aa)) the chain is Cytoplasmic. Over residues 127–150 (ANAHANAHHQPAQTTTTSIPTSAT) the composition is skewed to low complexity. Residues 127-244 (ANAHANAHHQ…TTSPNNENNA (118 aa)) are disordered. Polar residues-rich tracts occupy residues 151-165 (DNYTTVNGNVNQSYS), 185-201 (STATTQHTQLPKTSAVS), and 231-244 (SVPTTTSPNNENNA). Thr-236 is modified (phosphothreonine). A phosphoserine mark is found at Ser-237 and Ser-281. A helical; Anchor for type IV membrane protein membrane pass occupies residues 299–319 (TVTVQTAFLLAIICFLIGLLF).

This sequence belongs to the VAMP-associated protein (VAP) (TC 9.B.17) family. As to quaternary structure, interacts with epr1.

The protein localises to the endoplasmic reticulum membrane. Vesicle-associated membrane protein-associated protein (VAP) implicated in maintaining the cortical endoplasmic reticulum (ER)-plasma membrane (PM) attachment. ER-PM contacts function to modulate the distribution of contractile ring components to ensure robust ring assembly. ER-PM contacts function also in controlling exocytosis and maintenance of cell polarity regulating cell shape. VAPs play an important role in regulating eisosome assembly. VAPs also contribute to ER-phagy by tethering atg8 to the ER membrane, but also by maintaining the ER-plasma membrane contact. The polypeptide is Vesicle-associated membrane protein-associated protein scs22 (scs22) (Schizosaccharomyces pombe (strain 972 / ATCC 24843) (Fission yeast)).